The sequence spans 184 residues: MVKELISSAEDHMKKSVDVVRREFASLRAGRATPSILDKVTVSYYGTPTPLNQLANISVPEARVLVIQPWDKSVIPEVEKAILKSDVGITPSSDGTVIRLIIPQLTQERRTELVKVIKKKAEEGRVAVRNIRRDTNDSIKAKQKDGIPEDEAKRGQDELQKLTDKYVKEIDEMVKAKEQEIMQV.

Positions 137–158 (DSIKAKQKDGIPEDEAKRGQDE) are disordered.

This sequence belongs to the RRF family.

The protein localises to the cytoplasm. In terms of biological role, responsible for the release of ribosomes from messenger RNA at the termination of protein biosynthesis. May increase the efficiency of translation by recycling ribosomes from one round of translation to another. This chain is Ribosome-recycling factor, found in Desulforamulus reducens (strain ATCC BAA-1160 / DSM 100696 / MI-1) (Desulfotomaculum reducens).